A 235-amino-acid polypeptide reads, in one-letter code: Uridylate kinase (235 aa).

12–15 (KISG) lines the ATP pocket. Gly-54 serves as a coordination point for UMP. Positions 55 and 59 each coordinate ATP. UMP contacts are provided by residues Asp-72 and 133-140 (TGNPFFST). Residues Tyr-166 and Asp-169 each coordinate ATP.

It belongs to the UMP kinase family. As to quaternary structure, homohexamer.

The protein localises to the cytoplasm. It catalyses the reaction UMP + ATP = UDP + ADP. The protein operates within pyrimidine metabolism; CTP biosynthesis via de novo pathway; UDP from UMP (UMPK route): step 1/1. Its activity is regulated as follows. Inhibited by UTP. Catalyzes the reversible phosphorylation of UMP to UDP. The chain is Uridylate kinase from Acetivibrio thermocellus (strain ATCC 27405 / DSM 1237 / JCM 9322 / NBRC 103400 / NCIMB 10682 / NRRL B-4536 / VPI 7372) (Clostridium thermocellum).